Here is a 464-residue protein sequence, read N- to C-terminus: MTLRLFDTETRALRDFVPLAPGHASVYLCGATVQGDPHIGHVRSGVAFDVLRRWLLAHDYDVAFVRNVTDIEDKILNKAAEAGRPWWEWAATFERSFTWAYQQLGVLPPSVEPRATGHITQMVEMMQRLIDNGHAYAAGGDVYFDVRSYPRYGSLSGHKLDDVHQGESAGECKRDPRDFTLWKAEKPGEPSWPTPWGRGRPGWHLECSAMAEFYLGAAFDIHCGGLDLVFPHHENEIAQAKCAGDDFAQYWLHNGWVTMGGEKMSKSLGNVLSVPNVLKKVRPQELRYYLGSAHYRSMLEYSDTALDEGAAAFRRIESFVLRTQERAGEVPVGLWTEAFARALDDDLAVPAALAEVHGKVREGNIALDGGDLEGARGIASQVRAMLGILGVDPLDEHWTQETADASAATDALDVLVRAELERRQSARAEKNWAVADEVRDRLIRAGIEVTDTPNGPEWSLKAGQ.

Cys-29 is a Zn(2+) binding site. The 'HIGH' region motif lies at 31–41; that stretch reads ATVQGDPHIGH. Zn(2+) contacts are provided by Cys-207, His-232, and Glu-236. The short motif at 263–267 is the 'KMSKS' region element; sequence KMSKS. ATP is bound at residue Lys-266.

It belongs to the class-I aminoacyl-tRNA synthetase family. Monomer. The cofactor is Zn(2+).

The protein localises to the cytoplasm. It carries out the reaction tRNA(Cys) + L-cysteine + ATP = L-cysteinyl-tRNA(Cys) + AMP + diphosphate. This chain is Cysteine--tRNA ligase, found in Rhodococcus jostii (strain RHA1).